The primary structure comprises 352 residues: B1 bradykinin receptor (352 aa).

Residues 1–41 lie on the Extracellular side of the membrane; it reads MASWPPLELQSSNQSQLFPQNATACDNAPEAWDLLHRVLPT. N13 and N21 each carry an N-linked (GlcNAc...) asparagine glycan. A helical transmembrane segment spans residues 42 to 62; the sequence is FIISICSFGLLGNLFVLLVFL. The Cytoplasmic segment spans residues 63–72; that stretch reads LPRRRLNVAE. Residues 73-93 form a helical membrane-spanning segment; it reads IYLANLAASDLVFVLGLPFWA. Residues 94 to 110 lie on the Extracellular side of the membrane; the sequence is ENIWNQFNWPFGALLCR. A disulfide bridge connects residues C109 and C188. The helical transmembrane segment at 111–131 threads the bilayer; that stretch reads GINGVIKANLFISIFLVVAIS. At 132–153 the chain is on the cytoplasmic side; sequence QDRYCLLVHPMASRRRQRRRQA. Residues 154 to 174 traverse the membrane as a helical segment; sequence RVTCVLIWVVGGLLSIPTFLL. Residues 175–206 are Extracellular-facing; that stretch reads RSIQAVPDLNITACILLLPHEAWHFARIVELN. N-linked (GlcNAc...) asparagine glycosylation occurs at N184. Residues 207 to 227 traverse the membrane as a helical segment; sequence ILAFLLPLAAIVFFNYHILAS. Over 228–250 the chain is Cytoplasmic; sequence LRGREEVSRTRCGGRKDSKTTAL. A helical transmembrane segment spans residues 251-271; it reads ILTLVVAFLVCWAPYHFFAFL. The Extracellular segment spans residues 272-294; the sequence is EFLFQVQAIRSCFWEDFIDLGLQ. Residues 295–315 traverse the membrane as a helical segment; the sequence is LANFLAFTNSSLNPVIYVFVG. Residues 316–352 are Cytoplasmic-facing; the sequence is RLFRTKVWELYKQCTPKSLAPISSSHRKEIFQLFWRN. C329 is lipidated: S-palmitoyl cysteine.

Belongs to the G-protein coupled receptor 1 family. Bradykinin receptor subfamily. BDKRB1 sub-subfamily.

It is found in the cell membrane. Its function is as follows. This is a receptor for bradykinin. Could be a factor in chronic pain and inflammation. In Chlorocebus pygerythrus (Vervet monkey), this protein is B1 bradykinin receptor (BDKRB1).